The chain runs to 843 residues: Protein P (843 aa).

The interval 1 to 177 (MPLSYPHFRK…FCGSQYSWEQ (177 aa)) is terminal protein domain (TP). Residues 178 to 346 (ELQHGSTSLN…YCLSHIINLL (169 aa)) form a spacer region. 2 disordered regions span residues 228–255 (KQGQ…RWPA) and 284–314 (EANP…SVGS). The segment covering 239 to 249 (RSGRLRSRVHT) has biased composition (basic residues). A polymerase/reverse transcriptase domain (RT) region spans residues 347–690 (EDWGPCYEHG…YMNLYPVARQ (344 aa)). Residues 357–600 (EHHIRTPRTP…YNLHFMGYVI (244 aa)) form the Reverse transcriptase domain. Residues D429, D551, and D552 each coordinate Mg(2+).

Belongs to the hepadnaviridae P protein family.

The catalysed reaction is DNA(n) + a 2'-deoxyribonucleoside 5'-triphosphate = DNA(n+1) + diphosphate. It carries out the reaction Endonucleolytic cleavage to 5'-phosphomonoester.. Activated by host HSP70 and HSP40 in vitro to be able to bind the epsilon loop of the pgRNA. Because deletion of the RNase H region renders the protein partly chaperone-independent, the chaperones may be needed indirectly to relieve occlusion of the RNA-binding site by this domain. Inhibited by several reverse-transcriptase inhibitors: Lamivudine, Adefovir and Entecavir. Its function is as follows. Multifunctional enzyme that converts the viral RNA genome into dsDNA in viral cytoplasmic capsids. This enzyme displays a DNA polymerase activity that can copy either DNA or RNA templates, and a ribonuclease H (RNase H) activity that cleaves the RNA strand of RNA-DNA heteroduplexes in a partially processive 3'- to 5'-endonucleasic mode. Neo-synthesized pregenomic RNA (pgRNA) are encapsidated together with the P protein, and reverse-transcribed inside the nucleocapsid. Initiation of reverse-transcription occurs first by binding the epsilon loop on the pgRNA genome, and is initiated by protein priming, thereby the 5'-end of (-)DNA is covalently linked to P protein. Partial (+)DNA is synthesized from the (-)DNA template and generates the relaxed circular DNA (RC-DNA) genome. After budding and infection, the RC-DNA migrates in the nucleus, and is converted into a plasmid-like covalently closed circular DNA (cccDNA). The activity of P protein does not seem to be necessary for cccDNA generation, and is presumably released from (+)DNA by host nuclear DNA repair machinery. This Hepatitis B virus genotype F2 subtype adw4q (isolate Senegal/9203) (HBV-F) protein is Protein P.